A 223-amino-acid chain; its full sequence is Agamous-like MADS-box protein AGL11 (223 aa).

An MADS-box domain is found at 1 to 61; it reads MGRGKIEIKR…GRVYEYSNNN (61 aa). The 91-residue stretch at 87-177 folds into the K-box domain; the sequence is AQYYQQESAK…RTKIAEVERL (91 aa).

The protein resides in the nucleus. Functionally, probable transcription factor involved in seed development. This chain is Agamous-like MADS-box protein AGL11, found in Vitis vinifera (Grape).